A 618-amino-acid chain; its full sequence is MKQSKLLIPTLREMPSDAQVISHALMVRAGYVRQVSAGIYAYLPLANRTIEKFKTIMREEFEKIGAVEMLAPALLTADLWRESGRYETYGEDLYKLKNRDNSDFILGPTHEETFTTLVRDAVKSYKQLPLNLYQIQSKYRDEKRPRNGLLRTREFIMKDGYSFHHNYEDLDVTYEDYRQAYEAIFTRAGLDFKGIIGDGGAMGGKDSQEFMAVTPARTDLDRWVVLDKSIASMDDIPKEVLEDIKAELAAWMISGEDTIAYSTESSYAANLEMATNEYKPSSKVAAEDALAEVETPHCKTIDEVAAFLSVDETQTIKTLLFVADNEPVVALLVGNDHINTVKLKNYLAADFLEPASEEEARAFFGAGFGSLGPVNLAQGSRIVADRKVQNLTNAVAGANKDGFHVTGVNPGRDFQAEYVDIREVKEGEMSPDGHGVLQFARGIEVGHIFKLGTRYSDSMGATILDENGRTVPIVMGCYGIGVSRILSAVIEQHARLFVNKTPKGDYRYAWGINFPKELAPFDVHLITVNVKDQVAQDLTAKLEADLMAKGYDVLTDDRNERVGSKFSDSDLIGLPIRVTVGKKAAEGIVEIKIKATGDSIEVNAENLIETLEILTKEH.

It belongs to the class-II aminoacyl-tRNA synthetase family. ProS type 1 subfamily. Homodimer.

It localises to the cytoplasm. It carries out the reaction tRNA(Pro) + L-proline + ATP = L-prolyl-tRNA(Pro) + AMP + diphosphate. Its function is as follows. Catalyzes the attachment of proline to tRNA(Pro) in a two-step reaction: proline is first activated by ATP to form Pro-AMP and then transferred to the acceptor end of tRNA(Pro). As ProRS can inadvertently accommodate and process non-cognate amino acids such as alanine and cysteine, to avoid such errors it has two additional distinct editing activities against alanine. One activity is designated as 'pretransfer' editing and involves the tRNA(Pro)-independent hydrolysis of activated Ala-AMP. The other activity is designated 'posttransfer' editing and involves deacylation of mischarged Ala-tRNA(Pro). The misacylated Cys-tRNA(Pro) is not edited by ProRS. The polypeptide is Proline--tRNA ligase (Streptococcus pyogenes serotype M28 (strain MGAS6180)).